Consider the following 491-residue polypeptide: MPLPVQVFNLQGAVEPMQIDVDPQEDPQNAPDVNYVVENPSLDLEQYAASYSGLMRIERLQFIADHCPTLRVEALKMALSFVQRTFNVDMYEEIHRKLSEATRSSLRELQNAPDAIPESGVEPPALDTAWVEATRKKALLKLEKLDTDLKNYKGNSIKESIRRGHDDLGDHYLDCGDLSNALKCYSRARDYCTSAKHVINMCLNVIKVSVYLQNWSHVLSYVSKAESTPEIAEQRGERDSQTQAILTKLKCAAGLAELAARKYKQAAKCLLLASFDHCDFPELLSPSNVAIYGGLCALATFDRQELQRNVISSSSFKLFLELEPQVRDIIFKFYESKYASCLKMLDEMKDNLLLDMYLAPHVRTLYTQIRNRALIQYFSPYVSADMHRMAAAFNTTVAALEDELTQLILEGLISARVDSHSKILYARDVDQRSTTFEKSLLMGKEFQRRAKAMMLRAAVLRNQIHVKSPPREGSQGELTPANSQSRMSTNM.

Residues 269-431 (CLLLASFDHC…KILYARDVDQ (163 aa)) enclose the PCI domain. The segment at 465-491 (HVKSPPREGSQGELTPANSQSRMSTNM) is disordered. 2 positions are modified to phosphoserine: S468 and S474. A compositionally biased stretch (polar residues) spans 476–491 (GELTPANSQSRMSTNM). T479 carries the phosphothreonine modification. S483 carries the phosphoserine modification.

The protein belongs to the CSN1 family. In terms of assembly, component of the CSN complex, composed of COPS1/GPS1, COPS2, COPS3, COPS4, COPS5, COPS6, COPS7 (COPS7A or COPS7B), COPS8 and COPS9 isoform 1. In the complex, it probably interacts directly with COPS2, COPS3, COPS4 and COPS5. Interacts directly with inositol kinase ITPK1. Interacts with CAPN8. Interacts with USP48. Interacts with ASB4; this interaction negatively regulates GPS1. In terms of tissue distribution, widely expressed.

Its subcellular location is the cytoplasm. The protein localises to the nucleus. In terms of biological role, essential component of the COP9 signalosome complex (CSN), a complex involved in various cellular and developmental processes. The CSN complex is an essential regulator of the ubiquitin (Ubl) conjugation pathway by mediating the deneddylation of the cullin subunits of SCF-type E3 ligase complexes, leading to decrease the Ubl ligase activity of SCF-type complexes such as SCF, CSA or DDB2. The complex is also involved in phosphorylation of p53/TP53, c-jun/JUN, IkappaBalpha/NFKBIA, ITPK1 and IRF8/ICSBP, possibly via its association with CK2 and PKD kinases. CSN-dependent phosphorylation of TP53 and JUN promotes and protects degradation by the Ubl system, respectively. Suppresses G-protein- and mitogen-activated protein kinase-mediated signal transduction. In Homo sapiens (Human), this protein is COP9 signalosome complex subunit 1 (GPS1).